A 239-amino-acid polypeptide reads, in one-letter code: Geranylgeranylglyceryl phosphate synthase (239 aa).

Residues Asp18 and Ser45 each contribute to the Mg(2+) site. Residues Tyr166–Gly172, Gly197–Gly198, and Gly219–Thr220 each bind sn-glycerol 1-phosphate.

This sequence belongs to the GGGP/HepGP synthase family. Group II subfamily. The cofactor is Mg(2+).

It localises to the cytoplasm. It catalyses the reaction sn-glycerol 1-phosphate + (2E,6E,10E)-geranylgeranyl diphosphate = sn-3-O-(geranylgeranyl)glycerol 1-phosphate + diphosphate. It participates in membrane lipid metabolism; glycerophospholipid metabolism. Its function is as follows. Prenyltransferase that catalyzes the transfer of the geranylgeranyl moiety of geranylgeranyl diphosphate (GGPP) to the C3 hydroxyl of sn-glycerol-1-phosphate (G1P). This reaction is the first ether-bond-formation step in the biosynthesis of archaeal membrane lipids. In Pyrobaculum islandicum (strain DSM 4184 / JCM 9189 / GEO3), this protein is Geranylgeranylglyceryl phosphate synthase.